Consider the following 362-residue polypeptide: Protein mom-2 (362 aa).

A signal peptide spans 1–24 (MHINTPVLLAIIYFLVFAPKSADA). 5 disulfide bridges follow: Cys-80–Cys-91, Cys-129–Cys-137, Cys-139–Cys-167, Cys-217–Cys-231, and Cys-219–Cys-226. Asn-90 carries an N-linked (GlcNAc...) asparagine glycan. Ser-223 carries O-palmitoleoyl serine; by mom-1 lipidation. Positions 263–282 (TVRSSPSAGSSGRSERFARN) are disordered. Over residues 265–274 (RSSPSAGSSG) the composition is skewed to low complexity. Disulfide bonds link Cys-304–Cys-322, Cys-313–Cys-317, Cys-321–Cys-361, Cys-337–Cys-352, Cys-339–Cys-349, and Cys-344–Cys-345.

Belongs to the Wnt family. In terms of processing, palmitoleoylation is required for efficient binding to frizzled receptors. Depalmitoleoylation leads to Wnt signaling pathway inhibition. Expressed by anchor cell and vulva precursor cell descendants P5.ppa, P5.ppp, P7.paa and P7.pap. Expressed in the tail and weakly expressed in the vulva and body wall muscles.

The protein localises to the secreted. It localises to the extracellular space. The protein resides in the extracellular matrix. In terms of biological role, ligand for members of the frizzled family of seven transmembrane receptors. Required in embryonic development for endoderm specification and the correct positioning and orientation of the mitotic spindles and division planes in blastomere cells. Involved in cleavage axis determination. Binds to receptor tyrosine kinase cam-1. Together with wnt ligand lin-44, plays a role in controlling vulva precursor cell P7.p lineage orientation during vulva development, probably by acting as a ligand for tyrosine kinase receptor lin-18. May act redundantly with other Wnt ligands such as cwn-1 and cwn-2 to control seam cell polarity. In Caenorhabditis elegans, this protein is Protein mom-2 (mom-2).